The primary structure comprises 453 residues: Ribulose bisphosphate carboxylase large chain (453 aa).

A propeptide spanning residues Met-1 to Ser-2 is cleaved from the precursor. Pro-3 carries the post-translational modification N-acetylproline. Residue Lys-14 is modified to N6,N6,N6-trimethyllysine. Substrate contacts are provided by Asn-123 and Thr-173. Lys-175 functions as the Proton acceptor in the catalytic mechanism. Substrate is bound at residue Lys-177. Positions 201, 203, and 204 each coordinate Mg(2+). Lys-201 is subject to N6-carboxylysine. Catalysis depends on His-294, which acts as the Proton acceptor. Arg-295, His-327, and Ser-379 together coordinate substrate.

Belongs to the RuBisCO large chain family. Type I subfamily. As to quaternary structure, heterohexadecamer of 8 large chains and 8 small chains; disulfide-linked. The disulfide link is formed within the large subunit homodimers. The cofactor is Mg(2+). Post-translationally, the disulfide bond which can form in the large chain dimeric partners within the hexadecamer appears to be associated with oxidative stress and protein turnover.

Its subcellular location is the plastid. It is found in the chloroplast. The enzyme catalyses 2 (2R)-3-phosphoglycerate + 2 H(+) = D-ribulose 1,5-bisphosphate + CO2 + H2O. It catalyses the reaction D-ribulose 1,5-bisphosphate + O2 = 2-phosphoglycolate + (2R)-3-phosphoglycerate + 2 H(+). In terms of biological role, ruBisCO catalyzes two reactions: the carboxylation of D-ribulose 1,5-bisphosphate, the primary event in carbon dioxide fixation, as well as the oxidative fragmentation of the pentose substrate in the photorespiration process. Both reactions occur simultaneously and in competition at the same active site. The sequence is that of Ribulose bisphosphate carboxylase large chain from Galium aparine (Catchweed bedstraw).